The sequence spans 79 residues: Large ribosomal subunit protein bL28 (79 aa).

Belongs to the bacterial ribosomal protein bL28 family.

In Christiangramia forsetii (strain DSM 17595 / CGMCC 1.15422 / KT0803) (Gramella forsetii), this protein is Large ribosomal subunit protein bL28.